The following is a 186-amino-acid chain: Archaemetzincin (186 aa).

Position 136 (H136) interacts with Zn(2+). E137 acts as the Proton acceptor in catalysis. 6 residues coordinate Zn(2+): H140, H146, C147, C152, C171, and C174.

The protein belongs to the peptidase M54 family. In terms of assembly, monomer. The cofactor is Zn(2+).

Functionally, probable zinc metalloprotease whose natural substrate is unknown. This is Archaemetzincin from Thermococcus kodakarensis (strain ATCC BAA-918 / JCM 12380 / KOD1) (Pyrococcus kodakaraensis (strain KOD1)).